A 93-amino-acid polypeptide reads, in one-letter code: Small ribosomal subunit protein bS16 (93 aa).

It belongs to the bacterial ribosomal protein bS16 family.

The chain is Small ribosomal subunit protein bS16 from Dictyoglomus turgidum (strain DSM 6724 / Z-1310).